A 193-amino-acid chain; its full sequence is Acyl carrier protein phosphodiesterase (193 aa).

It belongs to the AcpH family.

It carries out the reaction holo-[ACP] + H2O = apo-[ACP] + (R)-4'-phosphopantetheine + H(+). Converts holo-ACP to apo-ACP by hydrolytic cleavage of the phosphopantetheine prosthetic group from ACP. This chain is Acyl carrier protein phosphodiesterase, found in Salmonella dublin (strain CT_02021853).